The sequence spans 730 residues: Patatin-like phospholipase domain-containing protein CIMG_04897 (730 aa).

Positions 1-11 (MTANSSRRRLQ) are enriched in basic residues. Residues 1–26 (MTANSSRRRLQMKSPRTDGDEKEEDY) form a disordered region. The helical transmembrane segment at 97–117 (WPFLLFVLSWIVFLGALYILT) threads the bilayer. In terms of domain architecture, PNPLA spans 281 to 472 (LCLSGGATLA…RTDIPLKALD (192 aa)). The GXSXG motif lies at 312 to 316 (GTSGG). Serine 314 (nucleophile) is an active-site residue. Aspartate 459 acts as the Proton acceptor in catalysis. A disordered region spans residues 667–730 (GHFREAPTSH…QGQSSGTKIG (64 aa)). Positions 721 to 730 (QGQSSGTKIG) are enriched in polar residues.

It belongs to the PLPL family.

The protein localises to the membrane. Its function is as follows. Probable lipid hydrolase. The chain is Patatin-like phospholipase domain-containing protein CIMG_04897 from Coccidioides immitis (strain RS) (Valley fever fungus).